A 608-amino-acid polypeptide reads, in one-letter code: Threonine--tRNA ligase (608 aa).

Residues 1–145 (MKTLLIHAKH…TIKPGRRVRP (145 aa)) form an editing domain region. 2 catalytic regions span residues 192–489 (PKYL…PSLP) and 193–489 (KYLE…PSLP). 3 residues coordinate Zn(2+): C286, H337, and H458.

The protein belongs to the class-II aminoacyl-tRNA synthetase family. Homodimer. Requires Zn(2+) as cofactor.

The protein localises to the cytoplasm. It catalyses the reaction tRNA(Thr) + L-threonine + ATP = L-threonyl-tRNA(Thr) + AMP + diphosphate + H(+). Functionally, catalyzes the attachment of threonine to tRNA(Thr) in a two-step reaction: L-threonine is first activated by ATP to form Thr-AMP and then transferred to the acceptor end of tRNA(Thr). Also edits incorrectly charged L-seryl-tRNA(Thr). The polypeptide is Threonine--tRNA ligase (Thermofilum pendens (strain DSM 2475 / Hrk 5)).